A 451-amino-acid polypeptide reads, in one-letter code: Trigger factor (451 aa).

A PPIase FKBP-type domain is found at 165–250 (DDKLTIDFEG…LHQIQAREAL (86 aa)).

Belongs to the FKBP-type PPIase family. Tig subfamily.

It is found in the cytoplasm. It catalyses the reaction [protein]-peptidylproline (omega=180) = [protein]-peptidylproline (omega=0). Involved in protein export. Acts as a chaperone by maintaining the newly synthesized protein in an open conformation. Functions as a peptidyl-prolyl cis-trans isomerase. The sequence is that of Trigger factor from Helicobacter pylori (strain HPAG1).